The sequence spans 382 residues: Small ribosomal subunit protein bS1 homolog (382 aa).

S1 motif domains lie at 18–85 (GDVV…LSKR), 103–168 (GHVF…LSHK), 189–257 (GDVV…LSIK), and 274–343 (GDIR…LSIK). At Ser-244 the chain carries Phosphoserine.

This sequence belongs to the bacterial ribosomal protein bS1 family.

The polypeptide is Small ribosomal subunit protein bS1 homolog (Bacillus cereus (strain ATCC 10987 / NRS 248)).